Here is a 235-residue protein sequence, read N- to C-terminus: Ribosomal RNA small subunit methyltransferase G (235 aa).

S-adenosyl-L-methionine contacts are provided by residues Gly98, Met103, Val149–Glu150, and Arg164.

This sequence belongs to the methyltransferase superfamily. RNA methyltransferase RsmG family.

It is found in the cytoplasm. The enzyme catalyses guanosine(527) in 16S rRNA + S-adenosyl-L-methionine = N(7)-methylguanosine(527) in 16S rRNA + S-adenosyl-L-homocysteine. Its function is as follows. Specifically methylates the N7 position of guanine in position 527 of 16S rRNA. This Cupriavidus pinatubonensis (strain JMP 134 / LMG 1197) (Cupriavidus necator (strain JMP 134)) protein is Ribosomal RNA small subunit methyltransferase G.